The sequence spans 197 residues: MFLYVAVGSLVVARLLLYPLRPADLTPPYWVAMGATAITVLAGAHIVEMADAPMAIVTSGLVAGASVVFWAFGPWLIPPLVAASIWKHVVHRVPLRYEATLWSVVFPLGMYGVGAYRLGLAAHLPIVESIGEFEGWVALAVWTITFVAMLHHLAATIGRSGRSSHAIGAADDTHAIICRPPRSFDHQVRAFRRNQPM.

The next 4 membrane-spanning stretches (helical) occupy residues 30–50, 61–81, 101–121, and 130–150; these read WVAMGATAITVLAGAHIVEMA, LVAGASVVFWAFGPWLIPPLV, LWSVVFPLGMYGVGAYRLGLA, and IGEFEGWVALAVWTITFVAML.

The protein localises to the cell membrane. This is an uncharacterized protein from Mycobacterium tuberculosis (strain CDC 1551 / Oshkosh).